The following is a 26-amino-acid chain: PKPKKKQRWTPLEISLEVLVLVLVXI.

The protein belongs to the peptidase M13 family. Requires Zn(2+) as cofactor.

The protein resides in the cell membrane. The enzyme catalyses Preferential cleavage of polypeptides between hydrophobic residues, particularly with Phe or Tyr at P1'.. The catalysed reaction is substance P + H2O = substance P(1-9) + L-Leu-L-Met-NH2. It carries out the reaction substance P + H2O = substance P(1-7) + L-Phe-Gly-L-Leu-L-Met-NH2. It catalyses the reaction neurotensin + H2O = neurotensin(1-11) + L-isoleucyl-L-leucine. The enzyme catalyses neurotensin + H2O = neurotensin(1-10) + L-tyrosyl-L-isoleucyl-L-leucine. Its function is as follows. Thermolysin-like specificity, but is almost confined on acting on polypeptides of up to 30 amino acids. Biologically important in the destruction of opioid peptides such as Met- and Leu-enkephalins by cleavage of a Gly-Phe bond. Catalyzes cleavage of bradykinin, substance P and neurotensin peptides. Able to cleave angiotensin-1, angiotensin-2 and angiotensin 1-9. Involved in the degradation of atrial natriuretic factor (ANF) and brain natriuretic factor (BNP(1-32)). Displays UV-inducible elastase activity toward skin preelastic and elastic fibers. The polypeptide is Neprilysin (MME) (Sus scrofa (Pig)).